The primary structure comprises 290 residues: Probable transcriptional regulatory protein HAH1 (290 aa).

This sequence belongs to the TACO1 family.

It localises to the mitochondrion. In Saccharomyces cerevisiae (strain ATCC 204508 / S288c) (Baker's yeast), this protein is Probable transcriptional regulatory protein HAH1.